We begin with the raw amino-acid sequence, 410 residues long: Regulator of microtubule dynamics protein 2 (410 aa).

The helical transmembrane segment at 9–28 (LILGIMVGTAGISLLLLWYH) threads the bilayer. Ser51 carries the phosphoserine modification. Residues 68 to 110 (FQERQLQILEKLNELLTNMEELKEEIRFLKEAIPKLEEYIQDE) are a coiled coil. Ser121 carries the phosphoserine modification. The span at 122-131 (PQHRARKRRL) shows a compositional bias: basic residues. The segment at 122–164 (PQHRARKRRLPTIQSSATSNSSEEAESEGGYITANTDTEEQSF) is disordered. Position 139 is a phosphothreonine (Thr139). Residue Tyr152 is modified to Phosphotyrosine. Phosphothreonine occurs at positions 154 and 157.

Belongs to the RMDN family. Interacts with microtubules.

It is found in the membrane. Its subcellular location is the cytoplasm. The protein localises to the cytoskeleton. It localises to the spindle. The protein resides in the spindle pole. This Homo sapiens (Human) protein is Regulator of microtubule dynamics protein 2 (RMDN2).